The chain runs to 268 residues: Orotidine 5'-phosphate decarboxylase (268 aa).

Substrate contacts are provided by residues Asp38, 60–62, 92–101, Tyr218, and Arg236; these read KTH and DRKFADIGNT. Catalysis depends on Lys94, which acts as the Proton donor.

This sequence belongs to the OMP decarboxylase family.

It carries out the reaction orotidine 5'-phosphate + H(+) = UMP + CO2. Its pathway is pyrimidine metabolism; UMP biosynthesis via de novo pathway; UMP from orotate: step 2/2. The polypeptide is Orotidine 5'-phosphate decarboxylase (URA3) (Candida parapsilosis (Yeast)).